We begin with the raw amino-acid sequence, 798 residues long: ATP-dependent RNA helicase bel (798 aa).

The disordered stretch occupies residues 16–248 (VAGLDLNGGS…SRWKEGGGSN (233 aa)). The span at 31-42 (PITSKTSTNSVT) shows a compositional bias: polar residues. 3 stretches are compositionally biased toward gly residues: residues 94-110 (RGGG…GGRG), 118-132 (YGYG…GGGG), and 154-178 (SGGG…GGSG). 2 positions are modified to phosphoserine: serine 177 and serine 179. Residues 198 to 209 (RNDRWQEPERPA) show a composition bias toward basic and acidic residues. Phosphoserine is present on residues serine 214 and serine 219. Residues 295 to 323 (TSFDDVQLTEIIRNNVALARYDKPTPVQK) carry the Q motif motif. ATP contacts are provided by residues 315–322 (YDKPTPVQ) and 339–346 (AQTGSGKT). A Helicase ATP-binding domain is found at 326-515 (IPIIINGRDL…SDFLSNYIFL (190 aa)). The DEAD box signature appears at 459-462 (DEAD). The Helicase C-terminal domain maps to 542-693 (YLLDLLSSIR…EIPSFMEDMS (152 aa)). The residue at position 638 (serine 638) is a Phosphoserine. 2 disordered regions span residues 689–765 (MEDM…SGGG) and 778–798 (GGSY…WWAQ). Gly residues-rich tracts occupy residues 706–717 (RGGGGRYGGGFG) and 740–750 (GGSGSGGGGGS).

Belongs to the DEAD box helicase family. DDX3/DED1 subfamily. As to expression, vas and bel colocalize in nuage (perinuclear, electron-dense granules in germline cells) and at the oocyte posterior during oogenesis.

It is found in the cytoplasm. The enzyme catalyses ATP + H2O = ADP + phosphate + H(+). In terms of biological role, ATP-dependent RNA helicase that is essential and required for cellular function, larval growth, and for male and female fertility. Also required for RNA interference (RNAi), double-stranded RNA induces potent and specific gene silencing, by acting downstream of dsRNA internalization. RNAi is mediated by the RNA-induced silencing complex (RISC), a sequence-specific, multicomponent nuclease that destroys or silences messenger RNAs homologous to the silencing trigger. This Drosophila melanogaster (Fruit fly) protein is ATP-dependent RNA helicase bel.